The following is a 134-amino-acid chain: Large ribosomal subunit protein uL16c (134 aa).

Residues 1–22 form a disordered region; sequence MLSPKRTRFRKQHRGRMKGISH.

This sequence belongs to the universal ribosomal protein uL16 family. Part of the 50S ribosomal subunit.

The protein localises to the plastid. It is found in the chloroplast. This Nicotiana tabacum (Common tobacco) protein is Large ribosomal subunit protein uL16c.